The chain runs to 741 residues: MKSVKIIIILALALLIQISHIADAKTYTVNFSSIGGLEVTPDSPHPKAWHRDTRDLPSNPYYTSDRTPFTQADIDLIESPDSSGFSSGGQDTHHFYFSIPQNANVVVRWRGHAQEDGDYVTLYYWDGSSWQKLEETTSGSWTWISGSFTASCEAHILAVGHDGSLEYTHPTSDYVEIEVSVANPLPVSVVKAEGNPRNYDGFFDTDTITLYAKVVSNGNPVPDYPVKFYAEFDSQRIFLGGAWTNSSGIAKLSFIPKNVGLSDKLRVNFVAKIEDVMTNCNAYTTTTNRAILAENVAITPGSYDITLVGRMYYSGGADWVRVNWYVDENSVLKPYPIPVVQKFTGNRASVTIWKYGLDDYCTDPNCHREGIYGNFDDADWDGACIAVGSTTPMCGRDVGGACYGDPDGPLKGRHDCTYFSGYRVGPFVQMNIPDHALGFLAAMVIQLFGGGELDDFMRATHYDQHEGPYGVLVSNAGCGALNPSTEQALTHGALGLFADPKGGLGVVGFVGLIADNEHAIGIMMGHRYGIHPFTAIVTTVPNYPSDEAGWRNYMDTWLYYLLNNAVYIAKTTGEELAAWSLRYPTQSDVVNLNRAFNDFITDFLPYMHEVLWLVVNCGKTVNHPFIISTFVQFKDNFEIVHRIMLNSTLNNALGNLISEVLLQLPNVVGPPDASTGINYLLNHRQYLSYSEREIFGYRMLQLLDQLTEVVVTLLKEIPLMEQSSRDNPGWDFNWIAGCGEG.

An N-terminal signal peptide occupies residues 1–22 (MKSVKIIIILALALLIQISHIA).

This is an uncharacterized protein from Archaeoglobus fulgidus (strain ATCC 49558 / DSM 4304 / JCM 9628 / NBRC 100126 / VC-16).